A 75-amino-acid chain; its full sequence is Defensin-like protein 59 (75 aa).

Positions 1-19 (MNITKSYVVIFFLVMLTNS) are cleaved as a signal peptide. 4 disulfide bridges follow: Cys39-Cys73, Cys43-Cys66, Cys52-Cys71, and Cys56-Cys72.

Belongs to the DEFL family.

The protein localises to the secreted. The chain is Defensin-like protein 59 from Arabidopsis thaliana (Mouse-ear cress).